Reading from the N-terminus, the 374-residue chain is MAIKVLVVDDSSFFRRRVSEIVNQDPELEVIATASNGAEAVKMTADLNPQVITMDIEMPVMDGITAVREIMAKCPTPILMFSSLTHDGAKATLDALDAGALDFLPKRFEDIATNKDEAILLLQQRVKALGRRRIFRPITRPSVAPVTPRPTTGSAVGNATTPVQSASAPVRSSPLSSIRASGKQYKLLLIGTSTGGPVALQKVLTQFPANYPHPILLIQHMPAAFTPAFASRLNGLCKIEVKEAANGDILRPGCAYLAPGGMQMMVERAGVTGRIKVLAGSAEMNYKPCVDITFASASKAYGGDVLAVVLTGMGADGREGARMLKAAGATIWAQDEASCVVYGMPQAVASTGIATQSISLDNMAESILKESARG.

The Response regulatory domain maps to 4–121 (KVLVVDDSSF…ATNKDEAILL (118 aa)). Position 55 is a 4-aspartylphosphate (Asp-55). Positions 141-170 (PSVAPVTPRPTTGSAVGNATTPVQSASAPV) are disordered. Residues 149-167 (RPTTGSAVGNATTPVQSAS) are compositionally biased toward polar residues. The region spanning 174-374 (PLSSIRASGK…ESILKESARG (201 aa)) is the CheB-type methylesterase domain. Catalysis depends on residues Ser-193, His-220, and Asp-316.

The protein belongs to the CheB family. Post-translationally, phosphorylated by CheA. Phosphorylation of the N-terminal regulatory domain activates the methylesterase activity.

It is found in the cytoplasm. The catalysed reaction is [protein]-L-glutamate 5-O-methyl ester + H2O = L-glutamyl-[protein] + methanol + H(+). It carries out the reaction L-glutaminyl-[protein] + H2O = L-glutamyl-[protein] + NH4(+). Its function is as follows. Involved in chemotaxis. Part of a chemotaxis signal transduction system that modulates chemotaxis in response to various stimuli. Catalyzes the demethylation of specific methylglutamate residues introduced into the chemoreceptors (methyl-accepting chemotaxis proteins or MCP) by CheR. Also mediates the irreversible deamidation of specific glutamine residues to glutamic acid. In Shewanella oneidensis (strain ATCC 700550 / JCM 31522 / CIP 106686 / LMG 19005 / NCIMB 14063 / MR-1), this protein is Protein-glutamate methylesterase/protein-glutamine glutaminase 1.